The chain runs to 352 residues: UDP-N-acetylglucosamine--N-acetylmuramyl-(pentapeptide) pyrophosphoryl-undecaprenol N-acetylglucosamine transferase 2 (352 aa).

Residues 11-13 (SAG), Arg-164, Ser-194, and Gln-289 contribute to the UDP-N-acetyl-alpha-D-glucosamine site.

It belongs to the glycosyltransferase 28 family. MurG subfamily.

It is found in the cell membrane. The enzyme catalyses di-trans,octa-cis-undecaprenyl diphospho-N-acetyl-alpha-D-muramoyl-L-alanyl-D-glutamyl-meso-2,6-diaminopimeloyl-D-alanyl-D-alanine + UDP-N-acetyl-alpha-D-glucosamine = di-trans,octa-cis-undecaprenyl diphospho-[N-acetyl-alpha-D-glucosaminyl-(1-&gt;4)]-N-acetyl-alpha-D-muramoyl-L-alanyl-D-glutamyl-meso-2,6-diaminopimeloyl-D-alanyl-D-alanine + UDP + H(+). Its pathway is cell wall biogenesis; peptidoglycan biosynthesis. Its function is as follows. Cell wall formation. Catalyzes the transfer of a GlcNAc subunit on undecaprenyl-pyrophosphoryl-MurNAc-pentapeptide (lipid intermediate I) to form undecaprenyl-pyrophosphoryl-MurNAc-(pentapeptide)GlcNAc (lipid intermediate II). The protein is UDP-N-acetylglucosamine--N-acetylmuramyl-(pentapeptide) pyrophosphoryl-undecaprenol N-acetylglucosamine transferase 2 of Bacillus thuringiensis subsp. konkukian (strain 97-27).